The following is a 1444-amino-acid chain: DNA polymerase III PolC-type (1444 aa).

In terms of domain architecture, Exonuclease spans 428-584 (YCVFDVETTG…FDAEATAYLA (157 aa)).

It belongs to the DNA polymerase type-C family. PolC subfamily.

Its subcellular location is the cytoplasm. The enzyme catalyses DNA(n) + a 2'-deoxyribonucleoside 5'-triphosphate = DNA(n+1) + diphosphate. Functionally, required for replicative DNA synthesis. This DNA polymerase also exhibits 3' to 5' exonuclease activity. This Listeria innocua serovar 6a (strain ATCC BAA-680 / CLIP 11262) protein is DNA polymerase III PolC-type.